Here is a 159-residue protein sequence, read N- to C-terminus: MKFLVILTLCIAGAIAHCDKAPFIKASWNQVKHNEVDILYTVFKAYPEIQDRFPQFAGKDLEAIKETAEFAVHSTRIVSFMSEIVSLVGNPAVQSSIDLLLVKMANDHKARGVTKELFEKFNIAFMGYLKSHTTWDEKTENAWKVVGDEHHAIVYSILE.

The signal sequence occupies residues 1–16; sequence MKFLVILTLCIAGAIA. In terms of domain architecture, Globin spans 17–159; sequence HCDKAPFIKA…HHAIVYSILE (143 aa). His-73 and His-108 together coordinate heme b.

This sequence belongs to the globin family.

The polypeptide is Globin CTT-W (CTT-W) (Chironomus thummi piger (Midge)).